The sequence spans 298 residues: Glutamyl-Q tRNA(Asp) synthetase (298 aa).

L-glutamate is bound by residues 8 to 12 (RFAPS) and Glu-44. The 'HIGH' region motif lies at 11–21 (PSPTGPLHFGS). Positions 100, 102, 123, and 127 each coordinate Zn(2+). Residues Tyr-183 and Arg-201 each coordinate L-glutamate. The 'KMSKS' region motif lies at 239 to 243 (KLSKQ). Lys-242 is a binding site for ATP.

Belongs to the class-I aminoacyl-tRNA synthetase family. GluQ subfamily. Zn(2+) is required as a cofactor.

Its function is as follows. Catalyzes the tRNA-independent activation of glutamate in presence of ATP and the subsequent transfer of glutamate onto a tRNA(Asp). Glutamate is transferred on the 2-amino-5-(4,5-dihydroxy-2-cyclopenten-1-yl) moiety of the queuosine in the wobble position of the QUC anticodon. The polypeptide is Glutamyl-Q tRNA(Asp) synthetase (Burkholderia orbicola (strain MC0-3)).